The chain runs to 121 residues: Small ribosomal subunit protein uS13 (121 aa).

A disordered region spans residues 91 to 121; it reads HRRGLPVRGQNSKNNARTRKGPRRTVANKKK. Basic residues predominate over residues 106-121; sequence ARTRKGPRRTVANKKK.

This sequence belongs to the universal ribosomal protein uS13 family. In terms of assembly, part of the 30S ribosomal subunit. Forms a loose heterodimer with protein S19. Forms two bridges to the 50S subunit in the 70S ribosome.

In terms of biological role, located at the top of the head of the 30S subunit, it contacts several helices of the 16S rRNA. In the 70S ribosome it contacts the 23S rRNA (bridge B1a) and protein L5 of the 50S subunit (bridge B1b), connecting the 2 subunits; these bridges are implicated in subunit movement. Contacts the tRNAs in the A and P-sites. This is Small ribosomal subunit protein uS13 from Bacillus cereus (strain ZK / E33L).